Here is a 428-residue protein sequence, read N- to C-terminus: Probable 4-methylmuconolactone transporter (428 aa).

Over 1-26 (MFAWYKAGSPQQKKTFWACYSGWALD) the chain is Cytoplasmic. Residues 27–47 (SFDMQMFSFLLPALTLTWGLT) form a helical membrane-spanning segment. Topologically, residues 48 to 50 (KAE) are periplasmic. A helical transmembrane segment spans residues 51-71 (VGVLGTVALVVTAIGGWGAGI). Residues 72–80 (LSDRYGRAR) are Cytoplasmic-facing. The chain crosses the membrane as a helical span at residues 81–101 (ILVLAIIWFTLFGVLAGFAQS). Over 102-110 (YQQLLIART) the chain is Periplasmic. Residues 111–131 (LQGLGFGGEWAVGAALMAEVI) form a helical membrane-spanning segment. Residues 132-145 (DSRHRGKAIGFVQS) are Cytoplasmic-facing. The helical transmembrane segment at 146-166 (GFALGWALAVVVATLLLAWLP) threads the bilayer. K167 is a topological domain (periplasmic). A helical transmembrane segment spans residues 168 to 188 (EMAWRVAFWSGIIPALIVLFI). At 189–227 (RRHVKDSSMFERARQSRAPRASLSSVFNRKYARTLALSS) the chain is on the cytoplasmic side. The helical transmembrane segment at 228–248 (VLVIGLQAGCYAILVWLPSLL) threads the bilayer. At 249-252 (NQRQ) the chain is on the periplasmic side. A helical transmembrane segment spans residues 253-273 (VAAGSMIVTVFIMAFGSFCGF). Residues 274-287 (AVTADLSDRIGRRP) lie on the Cytoplasmic side of the membrane. A helical membrane pass occupies residues 288–308 (TLILLSVCAWIVTVSYMLLPL). The Periplasmic portion of the chain corresponds to 309–314 (NTTLTA). Residues 315–335 (ILGFLVGFSAIGMFAALGPFL) form a helical membrane-spanning segment. The Cytoplasmic portion of the chain corresponds to 336–356 (SELFPTNVRTTCMGFAYNVGK). The chain crosses the membrane as a helical span at residues 357 to 371 (SIGAGSVVGVGVLST). The Periplasmic segment spans residues 372 to 377 (HIGLAN). Residues 378-398 (AMGTFCLVAYAFAVFGIMLLP) traverse the membrane as a helical segment. At 399 to 428 (ETRGIAIENIGEADAHSPAAPLAQPASARS) the chain is on the cytoplasmic side.

The protein belongs to the major facilitator superfamily. Sugar transporter (TC 2.A.1.1) family.

The protein localises to the cell inner membrane. Probable uptake of 4-methylmuconolactone. This Cupriavidus pinatubonensis (strain JMP 134 / LMG 1197) (Cupriavidus necator (strain JMP 134)) protein is Probable 4-methylmuconolactone transporter.